A 592-amino-acid polypeptide reads, in one-letter code: Aspartate--tRNA(Asp/Asn) ligase (592 aa).

L-aspartate is bound at residue Glu173. The aspartate stretch occupies residues 197–200 (QLFK). Arg219 provides a ligand contact to L-aspartate. Residues 219–221 (RDE) and Gln228 each bind ATP. His451 lines the L-aspartate pocket. Position 486 (Glu486) interacts with ATP. Arg493 provides a ligand contact to L-aspartate. 538–541 (GLDR) contributes to the ATP binding site.

The protein belongs to the class-II aminoacyl-tRNA synthetase family. Type 1 subfamily. Homodimer.

The protein resides in the cytoplasm. The enzyme catalyses tRNA(Asx) + L-aspartate + ATP = L-aspartyl-tRNA(Asx) + AMP + diphosphate. In terms of biological role, aspartyl-tRNA synthetase with relaxed tRNA specificity since it is able to aspartylate not only its cognate tRNA(Asp) but also tRNA(Asn). Reaction proceeds in two steps: L-aspartate is first activated by ATP to form Asp-AMP and then transferred to the acceptor end of tRNA(Asp/Asn). The sequence is that of Aspartate--tRNA(Asp/Asn) ligase from Alkalilimnicola ehrlichii (strain ATCC BAA-1101 / DSM 17681 / MLHE-1).